Consider the following 359-residue polypeptide: Dual-specificity RNA methyltransferase RlmN 1 (359 aa).

The active-site Proton acceptor is glutamate 96. The Radical SAM core domain occupies 102 to 335; the sequence is FKGRATVCIS…STVRQRRGID (234 aa). An intrachain disulfide couples cysteine 109 to cysteine 340. 3 residues coordinate [4Fe-4S] cluster: cysteine 116, cysteine 120, and cysteine 123. S-adenosyl-L-methionine is bound by residues 166-167, serine 198, 221-223, and asparagine 297; these read GE and SLH. The active-site S-methylcysteine intermediate is cysteine 340.

The protein belongs to the radical SAM superfamily. RlmN family. [4Fe-4S] cluster serves as cofactor.

Its subcellular location is the cytoplasm. It carries out the reaction adenosine(2503) in 23S rRNA + 2 reduced [2Fe-2S]-[ferredoxin] + 2 S-adenosyl-L-methionine = 2-methyladenosine(2503) in 23S rRNA + 5'-deoxyadenosine + L-methionine + 2 oxidized [2Fe-2S]-[ferredoxin] + S-adenosyl-L-homocysteine. The catalysed reaction is adenosine(37) in tRNA + 2 reduced [2Fe-2S]-[ferredoxin] + 2 S-adenosyl-L-methionine = 2-methyladenosine(37) in tRNA + 5'-deoxyadenosine + L-methionine + 2 oxidized [2Fe-2S]-[ferredoxin] + S-adenosyl-L-homocysteine. In terms of biological role, specifically methylates position 2 of adenine 2503 in 23S rRNA and position 2 of adenine 37 in tRNAs. m2A2503 modification seems to play a crucial role in the proofreading step occurring at the peptidyl transferase center and thus would serve to optimize ribosomal fidelity. This is Dual-specificity RNA methyltransferase RlmN 1 from Myxococcus xanthus (strain DK1622).